The primary structure comprises 151 residues: Transcription antitermination protein NusB (151 aa).

It belongs to the NusB family.

In terms of biological role, involved in transcription antitermination. Required for transcription of ribosomal RNA (rRNA) genes. Binds specifically to the boxA antiterminator sequence of the ribosomal RNA (rrn) operons. The protein is Transcription antitermination protein NusB of Hamiltonella defensa subsp. Acyrthosiphon pisum (strain 5AT).